Reading from the N-terminus, the 925-residue chain is Ectonucleotide pyrophosphatase/phosphodiesterase family member 1 (925 aa).

Over residues 1 to 17 (MERDGCAGGGSRGGEGG) the composition is skewed to gly residues. The tract at residues 1–43 (MERDGCAGGGSRGGEGGRAPREGPAGNGRDRGRSHAAEAPGDP) is disordered. Residues 1–76 (MERDGCAGGG…RTAKDPNTYK (76 aa)) are Cytoplasmic-facing. The Di-leucine motif motif lies at 45–52 (AAASLLAP). Residues 77–97 (VLSLVLSVCVLTTILGCIFGL) form a helical; Signal-anchor for type II membrane protein membrane-spanning segment. At 98-925 (KPSCAKEVKS…THLPTFSQED (828 aa)) the chain is on the extracellular side. SMB domains follow at residues 104–144 (EVKS…IEPE) and 145–189 (HIWT…GEKS). 10 disulfides stabilise this stretch: C108/C122, C112/C140, C120/C133, C126/C132, C149/C166, C154/C184, C164/C177, C170/C176, C195/C241, and C203/C415. An N-linked (GlcNAc...) asparagine glycan is attached at N179. The phosphodiesterase stretch occupies residues 191–591 (VEEPCESINE…APNNGTHGSL (401 aa)). AMP-binding residues include D218, T256, and N277. Residues D218 and T256 each contribute to the Zn(2+) site. Residue T256 is the AMP-threonine intermediate of the active site. Residues T256 and N277 each coordinate CMP. Positions 256 and 277 each coordinate dTMP. Residues T256 and N277 each contribute to the GMP site. T256 is subject to Phosphothreonine. N-linked (GlcNAc...) asparagine glycosylation occurs at N285. GMP-binding residues include L290, K295, and Y340. The AMP site is built by K295 and Y340. The CMP site is built by K295 and Y340. A dTMP-binding site is contributed by Y340. N341 is a glycosylation site (N-linked (GlcNAc...) asparagine). Residue D376 coordinates AMP. Positions 376, 380, 423, and 424 each coordinate Zn(2+). D376 is a CMP binding site. D376 contacts dTMP. D376 lines the GMP pocket. H380 contributes to the 2',3'-cGAMP binding site. H424 is a binding site for AMP. H424 contributes to the CMP binding site. H424 is a dTMP binding site. GMP is bound at residue H424. Disulfide bonds link C431–C530, C480–C868, C614–C672, C626–C726, C628–C711, and C838–C848. N477 carries an N-linked (GlcNAc...) asparagine glycan. S532 serves as a coordination point for 2',3'-cGAMP. H535 lines the AMP pocket. H535 lines the Zn(2+) pocket. Position 535 (H535) interacts with CMP. H535 provides a ligand contact to dTMP. Position 535 (H535) interacts with GMP. N-linked (GlcNAc...) asparagine glycosylation is found at N585, N643, N700, N731, and N748. Residues 597 to 647 (NPVYTPKHPKEVHPLVQCPFTRNPRDNLGCSCNPSILPIEDFQTQFNLTVA) form a linker region. The interval 654 to 925 (HETLPYGRPR…THLPTFSQED (272 aa)) is nuclease-like domain. Ca(2+) contacts are provided by D800, D802, D804, R806, and D808.

It belongs to the nucleotide pyrophosphatase/phosphodiesterase family. In terms of assembly, homodimer. Interacts with INSR; leading to inhibit INSR autophosphorylation and subsequent activation of INSR kinase activity. Monomeric. Zn(2+) is required as a cofactor. Post-translationally, autophosphorylated as part of the catalytic cycle of phosphodiesterase/pyrophosphatase activity. N-glycosylated. In terms of processing, the secreted form is produced through cleavage at Lys-103 by intracellular processing. As to expression, expressed in plasma cells and also in a number of non-lymphoid tissues, including the distal convoluted tubule of the kidney, chondrocytes and epididymis. Expressed in melanocytes but not in keratinocytes.

It is found in the cell membrane. The protein resides in the basolateral cell membrane. Its subcellular location is the secreted. The catalysed reaction is Hydrolytically removes 5'-nucleotides successively from the 3'-hydroxy termini of 3'-hydroxy-terminated oligonucleotides.. It catalyses the reaction a ribonucleoside 5'-triphosphate + H2O = a ribonucleoside 5'-phosphate + diphosphate + H(+). The enzyme catalyses ATP + H2O = AMP + diphosphate + H(+). It carries out the reaction UTP + H2O = UMP + diphosphate + H(+). The catalysed reaction is GTP + H2O = GMP + diphosphate + H(+). It catalyses the reaction CTP + H2O = CMP + diphosphate + H(+). The enzyme catalyses 2',3'-cGAMP + 2 H2O = GMP + AMP + 2 H(+). It carries out the reaction P(1),P(4)-bis(5'-adenosyl) tetraphosphate + H2O = AMP + ATP + 2 H(+). The catalysed reaction is 3',5'-cyclic AMP + H2O = AMP + H(+). With respect to regulation, at low concentrations of ATP, a phosphorylated intermediate is formed which inhibits further hydrolysis. In terms of biological role, nucleotide pyrophosphatase that generates diphosphate (PPi) and functions in bone mineralization and soft tissue calcification by regulating pyrophosphate levels. PPi inhibits bone mineralization and soft tissue calcification by binding to nascent hydroxyapatite crystals, thereby preventing further growth of these crystals. Preferentially hydrolyzes ATP, but can also hydrolyze other nucleoside 5' triphosphates such as GTP, CTP and UTP to their corresponding monophosphates with release of pyrophosphate, as well as diadenosine polyphosphates, and also 3',5'-cAMP to AMP. May also be involved in the regulation of the availability of nucleotide sugars in the endoplasmic reticulum and Golgi, and the regulation of purinergic signaling. Inhibits ectopic joint calcification and maintains articular chondrocytes by repressing hedgehog signaling; it is however unclear whether hedgehog inhibition is direct or indirect. Appears to modulate insulin sensitivity and function. Also involved in melanogenesis. Also able to hydrolyze 2',3'-cGAMP (cyclic GMP-AMP), a second messenger that activates TMEM173/STING and triggers type-I interferon production. 2',3'-cGAMP degradation takes place in the lumen or extracellular space, and not in the cytosol where it is produced; the role of 2',3'-cGAMP hydrolysis is therefore unclear. Not able to hydrolyze the 2',3'-cGAMP linkage isomer 3'-3'-cGAMP. This is Ectonucleotide pyrophosphatase/phosphodiesterase family member 1 from Homo sapiens (Human).